The chain runs to 48 residues: Large ribosomal subunit protein bL33A (48 aa).

The protein belongs to the bacterial ribosomal protein bL33 family.

The protein is Large ribosomal subunit protein bL33A of Exiguobacterium sibiricum (strain DSM 17290 / CCUG 55495 / CIP 109462 / JCM 13490 / 255-15).